A 317-amino-acid chain; its full sequence is Beta-ketoacyl-[acyl-carrier-protein] synthase III (317 aa).

Active-site residues include Cys-112 and His-244. Residues 245–249 (QANLR) form an ACP-binding region. The active site involves Asn-274.

The protein belongs to the thiolase-like superfamily. FabH family. In terms of assembly, homodimer.

The protein resides in the cytoplasm. It catalyses the reaction malonyl-[ACP] + acetyl-CoA + H(+) = 3-oxobutanoyl-[ACP] + CO2 + CoA. The protein operates within lipid metabolism; fatty acid biosynthesis. In terms of biological role, catalyzes the condensation reaction of fatty acid synthesis by the addition to an acyl acceptor of two carbons from malonyl-ACP. Catalyzes the first condensation reaction which initiates fatty acid synthesis and may therefore play a role in governing the total rate of fatty acid production. Possesses both acetoacetyl-ACP synthase and acetyl transacylase activities. Its substrate specificity determines the biosynthesis of branched-chain and/or straight-chain of fatty acids. The sequence is that of Beta-ketoacyl-[acyl-carrier-protein] synthase III from Salmonella typhimurium (strain LT2 / SGSC1412 / ATCC 700720).